Consider the following 227-residue polypeptide: MKHFIGNDWDHVLAPVFESGEYHKLHVFLKKEYQTRQIYPDMYHIFTAFKLTPFKDTKVVILGQDPYHNPSQANGMSFSVMPGTPLPPSLRNIYKELYDDVGAQPVNHGYLKRWADQGVLLLNAVLTVPYGQANGHQGKGWEMVTDAAIKALSERGQVVFILWGRFAQNKIPLIDQDKNVIIKSAHPSPFSANRGFFGSRPFSRCNAALKEFGRAPVDWQLPPNPEA.

The Proton acceptor role is filled by aspartate 65.

The protein belongs to the uracil-DNA glycosylase (UDG) superfamily. UNG family.

The protein localises to the cytoplasm. It carries out the reaction Hydrolyzes single-stranded DNA or mismatched double-stranded DNA and polynucleotides, releasing free uracil.. In terms of biological role, excises uracil residues from the DNA which can arise as a result of misincorporation of dUMP residues by DNA polymerase or due to deamination of cytosine. This Lactobacillus delbrueckii subsp. bulgaricus (strain ATCC 11842 / DSM 20081 / BCRC 10696 / JCM 1002 / NBRC 13953 / NCIMB 11778 / NCTC 12712 / WDCM 00102 / Lb 14) protein is Uracil-DNA glycosylase.